We begin with the raw amino-acid sequence, 389 residues long: MAATDRLNQTSDILSHSMKKTDTSMSIVTAENPYKVAVVGSGNWGTTIAKVVAENTKEKPELFQGRVDMWVFEEQIDGTPLTQIINTKHQNVKYLPNIDLPGNLVANPDLISTTKDADVIVFNVPHQFLGRIVSQMKGQIKPDARAISCLKGFEVGPKGVQLLSDYVTQELGIQCGALSGANLAPEVAKEHWSETTVAYQVPDDFKGEGKDIDHRVLKQLFHRPYFHVNVIDDVAGISIAGALKNVVALGCGFVTGLGWGNNAAAAIQRVGLGEIIKFGRMFFPESKVETYYQESAGVADLITTCSGGRNVRVATEMAKTGKSGEQVEKDILNGQSAQGLITAKEVHQWLESSGHTEEYPLFEAVYQITYENVPMKELPSMIEELDIVE.

Residues 40 to 45, F128, K151, and A184 contribute to the NAD(+) site; that span reads GSGNWG. K151 provides a ligand contact to substrate. K244 acts as the Proton acceptor in catalysis. Positions 309 and 338 each coordinate NAD(+). 309–310 is a substrate binding site; the sequence is RN.

The protein belongs to the NAD-dependent glycerol-3-phosphate dehydrogenase family.

It is found in the cytoplasm. The catalysed reaction is sn-glycerol 3-phosphate + NAD(+) = dihydroxyacetone phosphate + NADH + H(+). This chain is Glycerol-3-phosphate dehydrogenase [NAD(+)] 2 (GPD2), found in Zygosaccharomyces rouxii.